We begin with the raw amino-acid sequence, 399 residues long: MNDKHKNFGFSTRAIHYGYNALENNGALIPPVYMTSTFAFPTVEYGAGCFAGEESGHFYTRISNPTLALLESRMAALENGEAGVAFSSGMGAIAATFWTLLRPGDEIIVNRTLYGCTFALLHHGIGEFGVVVKHVDMSNLAELEAAIGPATRMIYFETPANPNMQLVDIAAVSAIAHTHNDLIVVIDNTYCTPYLQRPLELGADVVVHSATKYLSGHSDITAGVVVTRQSLADRIRLQGLKDLTGAVLSPHDAHLLMRGIKTLALRMDRHCSSAQVIAQMLQDHPAVEWVAYPGLPSFPQYALASRQMKLPGGMIAFELKGGMAAGQRFMNALQLFSRAVSLGGAESLAQHPASMTHSTYTLEERAKHGISEGLVRLAVGLEDIADLLADIEQAMKAMA.

Residues 59–61 (YTR) and 89–90 (GM) each bind pyridoxal 5'-phosphate. Tyrosine 114 provides a ligand contact to substrate. 209-211 (SAT) contributes to the pyridoxal 5'-phosphate binding site. An N6-(pyridoxal phosphate)lysine modification is found at lysine 212. Residue arginine 376 participates in substrate binding.

The protein belongs to the trans-sulfuration enzymes family. L-methionine gamma-lyase subfamily. As to quaternary structure, homotetramer; dimer of active dimers. Requires pyridoxal 5'-phosphate as cofactor.

The catalysed reaction is L-methionine + H2O = methanethiol + 2-oxobutanoate + NH4(+). Its function is as follows. Catalyzes the alpha,gamma-elimination of L-methionine to produce methanethiol, 2-oxobutanoate and ammonia. The chain is L-methionine gamma-lyase from Pseudomonas deceptionensis.